The chain runs to 974 residues: Bifunctional glutamine synthetase adenylyltransferase/adenylyl-removing enzyme (974 aa).

The tract at residues 1 to 464 (MKNAFLKTHL…HYAALFENEQ (464 aa)) is adenylyl removase. The tract at residues 468–974 (LEIGNLVFTG…CSIFKQIMKH (507 aa)) is adenylyl transferase.

It belongs to the GlnE family. It depends on Mg(2+) as a cofactor.

It catalyses the reaction [glutamine synthetase]-O(4)-(5'-adenylyl)-L-tyrosine + phosphate = [glutamine synthetase]-L-tyrosine + ADP. The catalysed reaction is [glutamine synthetase]-L-tyrosine + ATP = [glutamine synthetase]-O(4)-(5'-adenylyl)-L-tyrosine + diphosphate. Its function is as follows. Involved in the regulation of glutamine synthetase GlnA, a key enzyme in the process to assimilate ammonia. When cellular nitrogen levels are high, the C-terminal adenylyl transferase (AT) inactivates GlnA by covalent transfer of an adenylyl group from ATP to specific tyrosine residue of GlnA, thus reducing its activity. Conversely, when nitrogen levels are low, the N-terminal adenylyl removase (AR) activates GlnA by removing the adenylyl group by phosphorolysis, increasing its activity. The regulatory region of GlnE binds the signal transduction protein PII (GlnB) which indicates the nitrogen status of the cell. This Bartonella quintana (strain Toulouse) (Rochalimaea quintana) protein is Bifunctional glutamine synthetase adenylyltransferase/adenylyl-removing enzyme.